Consider the following 120-residue polypeptide: DNA-binding protein HQ_1105A (120 aa).

The disordered stretch occupies residues 1–55; that stretch reads MSETPDDLDELRQQRMEELRDQADGQQSQTSDNTAAAQEAAREKAEAQQEALLKQ. Over residues 10–23 the composition is skewed to basic and acidic residues; the sequence is ELRQQRMEELRDQA. Residues 24 to 34 are compositionally biased toward polar residues; the sequence is DGQQSQTSDNT.

Belongs to the PDCD5 family.

The chain is DNA-binding protein HQ_1105A from Haloquadratum walsbyi (strain DSM 16790 / HBSQ001).